The sequence spans 354 residues: 5,10-methenyltetrahydromethanopterin hydrogenase (354 aa).

It belongs to the HMD family.

The catalysed reaction is 5,10-methenyl-5,6,7,8-tetrahydromethanopterin + H2 = 5,10-methylenetetrahydromethanopterin + H(+). It participates in one-carbon metabolism; methanogenesis from CO(2); 5,10-methylene-5,6,7,8-tetrahydromethanopterin from 5,10-methenyl-5,6,7,8-tetrahydromethanopterin (hydrogen route): step 1/1. Functionally, catalyzes the reversible reduction of methenyl-H(4)MPT(+) to methylene-H(4)MPT. This is 5,10-methenyltetrahydromethanopterin hydrogenase from Methanococcus maripaludis (strain C5 / ATCC BAA-1333).